Here is a 216-residue protein sequence, read N- to C-terminus: Imidazole glycerol phosphate synthase subunit HisH (216 aa).

One can recognise a Glutamine amidotransferase type-1 domain in the interval 2-216 (SIAIIDYGSG…LISNFLRWKP (215 aa)). Cys-88 (nucleophile) is an active-site residue. Catalysis depends on residues His-196 and Glu-198.

As to quaternary structure, heterodimer of HisH and HisF.

It localises to the cytoplasm. The enzyme catalyses 5-[(5-phospho-1-deoxy-D-ribulos-1-ylimino)methylamino]-1-(5-phospho-beta-D-ribosyl)imidazole-4-carboxamide + L-glutamine = D-erythro-1-(imidazol-4-yl)glycerol 3-phosphate + 5-amino-1-(5-phospho-beta-D-ribosyl)imidazole-4-carboxamide + L-glutamate + H(+). It carries out the reaction L-glutamine + H2O = L-glutamate + NH4(+). The protein operates within amino-acid biosynthesis; L-histidine biosynthesis; L-histidine from 5-phospho-alpha-D-ribose 1-diphosphate: step 5/9. In terms of biological role, IGPS catalyzes the conversion of PRFAR and glutamine to IGP, AICAR and glutamate. The HisH subunit catalyzes the hydrolysis of glutamine to glutamate and ammonia as part of the synthesis of IGP and AICAR. The resulting ammonia molecule is channeled to the active site of HisF. The chain is Imidazole glycerol phosphate synthase subunit HisH from Bradyrhizobium diazoefficiens (strain JCM 10833 / BCRC 13528 / IAM 13628 / NBRC 14792 / USDA 110).